Consider the following 75-residue polypeptide: Conotoxin ar11a (75 aa).

An N-terminal signal peptide occupies residues 1 to 19 (MKLCATFLLVLVTLPLVTG). A propeptide spanning residues 20-36 (EKSSERSLSGAILRGVR) is cleaved from the precursor. Intrachain disulfides connect cysteine 39-cysteine 53, cysteine 46-cysteine 58, cysteine 52-cysteine 63, and cysteine 57-cysteine 70.

As to expression, expressed by the venom duct.

The protein localises to the secreted. Both natural (L-Leu form) and synthetic (D-Leu from) peptides equally cause sensitivity to touch and body tremor. Neither L-Leu form nor D-Leu form is active on nerve-muscle preparation. The polypeptide is Conotoxin ar11a (Conus arenatus (Sand-dusted cone)).